Here is a 192-residue protein sequence, read N- to C-terminus: Peptidyl-tRNA hydrolase (192 aa).

Y18 lines the tRNA pocket. H23 (proton acceptor) is an active-site residue. F69, N71, and N117 together coordinate tRNA.

It belongs to the PTH family. Monomer.

Its subcellular location is the cytoplasm. The enzyme catalyses an N-acyl-L-alpha-aminoacyl-tRNA + H2O = an N-acyl-L-amino acid + a tRNA + H(+). Its function is as follows. Hydrolyzes ribosome-free peptidyl-tRNAs (with 1 or more amino acids incorporated), which drop off the ribosome during protein synthesis, or as a result of ribosome stalling. Catalyzes the release of premature peptidyl moieties from peptidyl-tRNA molecules trapped in stalled 50S ribosomal subunits, and thus maintains levels of free tRNAs and 50S ribosomes. This Neisseria meningitidis serogroup C (strain 053442) protein is Peptidyl-tRNA hydrolase.